The primary structure comprises 474 residues: Gamma-aminobutyric acid receptor subunit beta-1 (474 aa).

Residues 1-25 (MWTVQNRESLGLLSFPVMITMVCCA) form the signal peptide. The Extracellular portion of the chain corresponds to 26-245 (HSTNEPSNMS…SFRLKRNIGY (220 aa)). An N-linked (GlcNAc...) asparagine glycan is attached at N105. A histamine-binding site is contributed by Y122. A disulfide bridge links C161 with C175. An N-linked (GlcNAc...) asparagine glycan is attached at N174. Residues 181–182 (SY) and T227 contribute to the histamine site. 4-aminobutanoate contacts are provided by Y182 and T227. 3 helical membrane passes run 246-267 (FILQTYMPSTLITILSWVSFWI), 271-293 (ASAARVALGITTVLTMTTISTHL), and 305-327 (AIDIYLMGCFVFVFLALLEYAFV). The Cytoplasmic segment spans residues 328 to 451 (NYIFFGKGPQ…DLTDVNSIDK (124 aa)). Residues 452-473 (WSRMFFPITFSLFNVVYWLYYV) form a helical membrane-spanning segment.

Belongs to the ligand-gated ion channel (TC 1.A.9) family. Gamma-aminobutyric acid receptor (TC 1.A.9.5) subfamily. GABRB1 sub-subfamily. Heteropentamer, formed by a combination of alpha (GABRA1-6), beta (GABRB1-3), gamma (GABRG1-3), delta (GABRD), epsilon (GABRE), rho (GABRR1-3), pi (GABRP) and theta (GABRQ) chains, each subunit exhibiting distinct physiological and pharmacological properties. Binds UBQLN1.

The protein resides in the postsynaptic cell membrane. It localises to the cell membrane. It catalyses the reaction chloride(in) = chloride(out). Potentiated by etomidate, propofol, pregnanolone and flurazepam. Potentiated by histamine. In terms of biological role, beta subunit of the heteropentameric ligand-gated chloride channel gated by gamma-aminobutyric acid (GABA), a major inhibitory neurotransmitter in the brain. GABA-gated chloride channels, also named GABA(A) receptors (GABAAR), consist of five subunits arranged around a central pore and contain one or two GABA active binding sites located at the alpha and beta subunit interfaces, depending on subunit composition. When activated by GABA, GABAARs selectively allow the flow of chloride anions across the cell membrane down their electrochemical gradient. Chloride influx into the postsynaptic neuron following GABAAR opening decreases the neuron ability to generate a new action potential, thereby reducing nerve transmission. Beta-containing GABAARs can simultaneously bind GABA and histamine where histamine binds at the interface of two neighboring beta subunits, which may be involved in the regulation of sleep and wakefulness. This chain is Gamma-aminobutyric acid receptor subunit beta-1, found in Homo sapiens (Human).